The following is a 788-amino-acid chain: Phenylalanine--tRNA ligase beta subunit (788 aa).

Positions 39–147 constitute a tRNA-binding domain; the sequence is FNVSGEIITA…DPVELGVNVV (109 aa). One can recognise a B5 domain in the interval 399-472; sequence IEPKKVMLRK…RIYGYEKVES (74 aa). Mg(2+)-binding residues include Asp-450, Asp-456, Glu-459, and Glu-460. Positions 694–787 constitute an FDX-ACB domain; sequence PRFPAVRRDI…AEREFGIRRR (94 aa).

Belongs to the phenylalanyl-tRNA synthetase beta subunit family. Type 1 subfamily. As to quaternary structure, tetramer of two alpha and two beta subunits. The cofactor is Mg(2+).

The protein localises to the cytoplasm. The catalysed reaction is tRNA(Phe) + L-phenylalanine + ATP = L-phenylalanyl-tRNA(Phe) + AMP + diphosphate + H(+). The polypeptide is Phenylalanine--tRNA ligase beta subunit (pheT) (Thermotoga maritima (strain ATCC 43589 / DSM 3109 / JCM 10099 / NBRC 100826 / MSB8)).